The chain runs to 125 residues: Histone H2A (125 aa).

A compositionally biased stretch (basic residues) spans 1 to 18 (MSGRGKGGKAKAKAKSRS). The disordered stretch occupies residues 1-21 (MSGRGKGGKAKAKAKSRSSRA). Position 2 is an N-acetylserine (S2). Q104 is modified (N5-methylglutamine).

The protein belongs to the histone H2A family. The nucleosome is a histone octamer containing two molecules each of H2A, H2B, H3 and H4 assembled in one H3-H4 heterotetramer and two H2A-H2B heterodimers. The octamer wraps approximately 147 bp of DNA.

The protein localises to the nucleus. The protein resides in the chromosome. Functionally, core component of nucleosome. Nucleosomes wrap and compact DNA into chromatin, limiting DNA accessibility to the cellular machineries which require DNA as a template. Histones thereby play a central role in transcription regulation, DNA repair, DNA replication and chromosomal stability. DNA accessibility is regulated via a complex set of post-translational modifications of histones, also called histone code, and nucleosome remodeling. This is Histone H2A from Mytilus californianus (California mussel).